The sequence spans 285 residues: Aldo-keto reductase (285 aa).

Alanine 165–lysine 175 lines the NADP(+) pocket.

It belongs to the aldo/keto reductase family. Aldo/keto reductase 2 subfamily.

The chain is Aldo-keto reductase from Babesia bovis.